The sequence spans 129 residues: Glycine cleavage system H protein (129 aa).

In terms of domain architecture, Lipoyl-binding spans 24–106 (TFTVGITEHA…FGDGWLFRIK (83 aa)). Lys65 carries the N6-lipoyllysine modification.

Belongs to the GcvH family. As to quaternary structure, the glycine cleavage system is composed of four proteins: P, T, L and H. The cofactor is (R)-lipoate.

Functionally, the glycine cleavage system catalyzes the degradation of glycine. The H protein shuttles the methylamine group of glycine from the P protein to the T protein. The sequence is that of Glycine cleavage system H protein from Pseudoalteromonas translucida (strain TAC 125).